The primary structure comprises 473 residues: Gamma-aminobutyric acid receptor subunit beta-3 (473 aa).

The signal sequence occupies residues 1–25 (MWGLAGGRLFGIFSAPVLVAVVCCA). Residues 26 to 246 (QSVNDPGNMS…FRLKRNIGYF (221 aa)) lie on the Extracellular side of the membrane. N-linked (GlcNAc...) asparagine glycans are attached at residues Asn33 and Asn105. Benzamidine is bound at residue 120–122 (DTY). Position 122 (Tyr122) interacts with 4-aminobutanoate. Tyr122 lines the histamine pocket. The cysteines at positions 161 and 175 are disulfide-linked. A glycan (N-linked (GlcNAc...) asparagine) is linked at Asn174. Glu180 and Tyr182 together coordinate 4-aminobutanoate. Benzamidine contacts are provided by residues 180 to 182 (ESY) and Phe225. 181–182 (SY) lines the histamine pocket. Thr227 is a 4-aminobutanoate binding site. Residue Thr227 participates in histamine binding. Residues 247 to 267 (ILQTYMPSILITILSWVSFWI) traverse the membrane as a helical segment. Over 268-271 (NYDA) the chain is Cytoplasmic. The chain crosses the membrane as a helical span at residues 272–292 (SAARVALGITTVLTMTTINTH). At 293–304 (LRETLPKIPYVK) the chain is on the extracellular side. A helical membrane pass occupies residues 305–328 (AIDMYLMGCFVFVFLALLEYAFVN). Over 329–447 (YIFFGRGPQR…KIPDLTDVNA (119 aa)) the chain is Cytoplasmic. The chain crosses the membrane as a helical span at residues 448-470 (IDRWSRIVFPFTFSLFNLVYWLY). Residues 471–473 (YVN) are Extracellular-facing.

This sequence belongs to the ligand-gated ion channel (TC 1.A.9) family. Gamma-aminobutyric acid receptor (TC 1.A.9.5) subfamily. GABRB3 sub-subfamily. In terms of assembly, heteropentamer, formed by a combination of alpha (GABRA1-6), beta (GABRB1-3), gamma (GABRG1-3), delta (GABRD), epsilon (GABRE), rho (GABRR1-3), pi (GABRP) and theta (GABRQ) chains, each subunit exhibiting distinct physiological and pharmacological properties. Can form functional homopentamers (in vitro). Interacts with UBQLN1. May interact with KIF21B. Identified in a complex of 720 kDa composed of LHFPL4, NLGN2, GABRA1, GABRB2, GABRG2 and GABRB3. Interacts with LHFPL4. Interacts with GIT1; this interaction is required for synaptic GABRB3 surface stability and inhibitory synapse strength.

It is found in the postsynaptic cell membrane. The protein localises to the cell membrane. It localises to the cytoplasmic vesicle membrane. The catalysed reaction is chloride(in) = chloride(out). Potentiated by histamine. Beta subunit of the heteropentameric ligand-gated chloride channel gated by gamma-aminobutyric acid (GABA), a major inhibitory neurotransmitter in the brain. GABA-gated chloride channels, also named GABA(A) receptors (GABAAR), consist of five subunits arranged around a central pore and contain GABA active binding site(s) located at the alpha and beta subunit interface(s). GABAARs containing beta-3/GABRB3 subunit are found at both synaptic and extrasynaptic sites. When activated by GABA, GABAARs selectively allow the flow of chloride anions across the cell membrane down their electrochemical gradient. Chloride influx into the postsynaptic neuron following GABAAR opening decreases the neuron ability to generate a new action potential, thereby reducing nerve transmission. GABAARs containing alpha-1 and beta-3 subunits exhibit synaptogenic activity; the gamma-2 subunit being necessary but not sufficient to induce rapid synaptic contacts formation. Extrasynaptic beta-3 receptors contribute to the tonic GABAergic inhibition. GABAARs containing alpha-1, beta-3 and epsilon subunits may also permit spontaneous chloride channel activity while preserving the structural information required for GABA-gated openings. Beta-containing GABAARs can simultaneously bind GABA and histamine where histamine binds at the interface of two neighboring beta subunits, which may be involved in the regulation of sleep and wakefulness. Plays an important role in somatosensation and in the production of antinociception. This Homo sapiens (Human) protein is Gamma-aminobutyric acid receptor subunit beta-3.